Consider the following 591-residue polypeptide: Protein kinase C zeta type (591 aa).

The PB1 domain occupies 15 to 98 (RVRLKAHYSG…DGLILHVFPS (84 aa)). The interaction with SQSTM1 stretch occupies residues 79–145 (AFRLAGQHRD…KRFNRRAYCG (67 aa)). The segment at 130 to 180 (GHLFQAKRFNRRAYCGQCSERIWGLARQGYRCINCKLLVHKRCHGLVPLTC) adopts a Phorbol-ester/DAG-type zinc-finger fold. The Protein kinase domain occupies 251–517 (FDLIRVIGRG…FSDIKSHAFF (267 aa)). ATP contacts are provided by residues 257 to 265 (IGRGSYAKV) and Lys280. Asp375 serves as the catalytic Proton acceptor. Residue Thr409 is modified to Phosphothreonine; by PDPK1 and PI3K. The 72-residue stretch at 518–589 (RSIDWDLLEK…INPLLLSTEE (72 aa)) folds into the AGC-kinase C-terminal domain. The residue at position 559 (Thr559) is a Phosphothreonine. A Phosphoserine modification is found at Ser590.

The protein belongs to the protein kinase superfamily. AGC Ser/Thr protein kinase family. PKC subfamily. Interacts with PARD6A, PARD6B and PARD6G. Part of a complex with PARD3, PARD6A or PARD6B or PARD6G and CDC42 or RAC1. Interacts with ADAP1/CENTA1. Interacts directly with SQSTM1. Forms a ternary complex with SQSTM1 and KCNAB2. Forms another ternary complex with SQSTM1 and GABRR3. Forms a complex with SQSTM1 and MAP2K5. Interacts (via the protein kinase domain) with WWC1. Forms a tripartite complex with WWC1 and DDR1, but predominantly in the absence of collagen. Component of the Par polarity complex, composed of at least phosphorylated PRKCZ, PARD3 and TIAM1. Interacts with PDPK1 (via N-terminal region). Interacts with WDFY2 (via WD repeats 1-3). Interacts with VAMP2. Forms a complex with WDFY2 and VAMP2. Interacts with APPL1. Interacts with WWC1, WWC2 and WWC3. Post-translationally, CDH5 is required for its phosphorylation at Thr-409. Phosphorylated by protein kinase PDPK1; phosphorylation is inhibited by the apoptotic C-terminal cleavage product of PKN2. Phosphorylation at Thr-409 by PI3K activates the kinase.

The protein resides in the cytoplasm. It is found in the endosome. The protein localises to the cell junction. Its subcellular location is the membrane. It catalyses the reaction L-seryl-[protein] + ATP = O-phospho-L-seryl-[protein] + ADP + H(+). It carries out the reaction L-threonyl-[protein] + ATP = O-phospho-L-threonyl-[protein] + ADP + H(+). Its activity is regulated as follows. Atypical PKCs (PRKCI and PRKCZ) exhibit an elevated basal enzymatic activity (that may be due to the interaction with SMG1 or SQSTM1) and are not regulated by diacylglycerol, phosphatidylserine, phorbol esters or calcium ions. Two specific sites, Thr-409 (activation loop of the kinase domain) and Thr-559 (turn motif), need to be phosphorylated for its full activation. Phosphatidylinositol 3,4,5-trisphosphate might be a physiological activator. Its function is as follows. Calcium- and diacylglycerol-independent serine/threonine-protein kinase that functions in phosphatidylinositol 3-kinase (PI3K) pathway and mitogen-activated protein (MAP) kinase cascade, and is involved in NF-kappa-B activation, mitogenic signaling, cell proliferation, cell polarity, inflammatory response and maintenance of long-term potentiation (LTP). Upon lipopolysaccharide (LPS) treatment in macrophages, or following mitogenic stimuli, functions downstream of PI3K to activate MAP2K1/MEK1-MAPK1/ERK2 signaling cascade independently of RAF1 activation. Required for insulin-dependent activation of AKT3, but may function as an adapter rather than a direct activator. Upon insulin treatment may act as a downstream effector of PI3K and contribute to the activation of translocation of the glucose transporter SLC2A4/GLUT4 and subsequent glucose transport in adipocytes. In EGF-induced cells, binds and activates MAP2K5/MEK5-MAPK7/ERK5 independently of its kinase activity and can activate JUN promoter through MEF2C. Through binding with SQSTM1/p62, functions in interleukin-1 signaling and activation of NF-kappa-B with the specific adapters RIPK1 and TRAF6. Participates in TNF-dependent transactivation of NF-kappa-B by phosphorylating and activating IKBKB kinase, which in turn leads to the degradation of NF-kappa-B inhibitors. In migrating astrocytes, forms a cytoplasmic complex with PARD6A and is recruited by CDC42 to function in the establishment of cell polarity along with the microtubule motor and dynein. In association with FEZ1, stimulates neuronal differentiation in PC12 cells. In the inflammatory response, is required for the T-helper 2 (Th2) differentiation process, including interleukin production, efficient activation of JAK1 and the subsequent phosphorylation and nuclear translocation of STAT6. May be involved in development of allergic airway inflammation (asthma), a process dependent on Th2 immune response. In the NF-kappa-B-mediated inflammatory response, can relieve SETD6-dependent repression of NF-kappa-B target genes by phosphorylating the RELA subunit at 'Ser-311'. Phosphorylates VAMP2 in vitro. Phosphorylates and activates LRRK1, which phosphorylates RAB proteins involved in intracellular trafficking. This is Protein kinase C zeta type (PRKCZ) from Oryctolagus cuniculus (Rabbit).